The sequence spans 339 residues: Uridylate kinase PUMPKIN, chloroplastic (339 aa).

A chloroplast-targeting transit peptide spans 1-53; that stretch reads MAIPLPLTSCSPISTSSSISRTSFVPLTLRNRTFFSNQNYSRRVLISCSSSLS. The span at 52–79 shows a compositional bias: low complexity; sequence LSSDNGSSPDSMNGNGNGNGSSLNGQSS. The interval 52–89 is disordered; the sequence is LSSDNGSSPDSMNGNGNGNGSSLNGQSSFPRLPSFDGT. 102–105 contributes to the ATP binding site; sequence KVSG. Residues 110 to 115 form an involved in allosteric activation by GTP region; the sequence is GDEEQN. Gly-144 contributes to the UMP binding site. Gly-145 and Arg-149 together coordinate ATP. Asp-165 contributes to the UMP binding site. Residues 180 to 184 and 189 to 191 each bind ATP; these read QATME and PTR. 226-233 is a binding site for UMP; sequence TGNPFFTT. Thr-253, Phe-259, and Asp-262 together coordinate ATP.

The protein belongs to the UMP kinase family. As to quaternary structure, homomultimer. Homohexamer. Forms RNA-containing megadalton-sized complexes. As to expression, expressed exclusively in leaves, but not in roots.

Its subcellular location is the plastid. It localises to the chloroplast stroma. The enzyme catalyses UMP + ATP = UDP + ADP. It functions in the pathway pyrimidine metabolism; CTP biosynthesis via de novo pathway; UDP from UMP (UMPK route): step 1/1. In terms of biological role, catalyzes the reversible phosphorylation of UMP to UDP. Required for specific post-transcriptional processes of many plastid transcripts (e.g. PSI (PsaA, PsaF), PSII (D1, CP43, CP47), Cytochrome b(6)f (Cytb(6)), ATP synthase (AtpC), LHCs (LHCa3, LHCb2), and NDH (NdhH)), thus being essential for retaining photosynthetic activity in chloroplasts. Associates with group II introns of the plastid transcripts trnG-UCC, trnV-UAC, petB, petD and ndhA to stabilize corresponding precursor RNAs. The polypeptide is Uridylate kinase PUMPKIN, chloroplastic (Arabidopsis thaliana (Mouse-ear cress)).